A 518-amino-acid polypeptide reads, in one-letter code: MGRMALLSTSNKQGLVELARALVQEFGFTLLSSGGTAKALQTAGIPVTTVSEYTGAPEILGGRVKTLHPKIHGGILARRDRPQDEADLQAQAIHPIDLVVVNLYPFAETIAQPNVTLAEAIEQIDIGGPTLIRAAAKNHAHVTVLVDPSQYETYLQELRLYGDAQPAFRLACAQQAFALTAHYDQAIAEYLQKVTAAGTEPEILPPVFHLTGRQKQVLRYGENPHQRASWYVCGAHPRGWAAAHLLQGKELSYNNLLDLEAARGVISEFLGDSPPAAVIIKHTNPCGVAEGKTLVEAYERAFAADRVSAFGGIVALNRPLDGATAEALTRTFLECVVAPACEEAALPILKTKPKMRVLTLPELHRAPTTAIQTIAGGFLVQEIHPLPIDPEAWQVVTATEPSPELMAELIFAWKVVKHVKSNAIVVSRDRQTQGIGAGQMNRVGAVEIALSAAGEAARGGVLASDGFFPFADSVEAAALAGIAAIIQPGGSLRDSESIQAANAAGIAMVFTNQRHFRH.

An MGS-like domain is found at 1–146 (MGRMALLSTS…KNHAHVTVLV (146 aa)).

Belongs to the PurH family.

The enzyme catalyses (6R)-10-formyltetrahydrofolate + 5-amino-1-(5-phospho-beta-D-ribosyl)imidazole-4-carboxamide = 5-formamido-1-(5-phospho-D-ribosyl)imidazole-4-carboxamide + (6S)-5,6,7,8-tetrahydrofolate. It catalyses the reaction IMP + H2O = 5-formamido-1-(5-phospho-D-ribosyl)imidazole-4-carboxamide. Its pathway is purine metabolism; IMP biosynthesis via de novo pathway; 5-formamido-1-(5-phospho-D-ribosyl)imidazole-4-carboxamide from 5-amino-1-(5-phospho-D-ribosyl)imidazole-4-carboxamide (10-formyl THF route): step 1/1. The protein operates within purine metabolism; IMP biosynthesis via de novo pathway; IMP from 5-formamido-1-(5-phospho-D-ribosyl)imidazole-4-carboxamide: step 1/1. This is Bifunctional purine biosynthesis protein PurH from Thermosynechococcus vestitus (strain NIES-2133 / IAM M-273 / BP-1).